Consider the following 288-residue polypeptide: Acetyl-coenzyme A carboxylase carboxyl transferase subunit beta (288 aa).

Residues 34-288 form the CoA carboxyltransferase N-terminal domain; sequence LFAKCPACKH…HLVAFHGGVS (255 aa). Residues C38, C41, C56, and C59 each contribute to the Zn(2+) site. Residues 38–59 form a C4-type zinc finger; that stretch reads CPACKHMIYQKDLGPAKICPTC.

The protein belongs to the AccD/PCCB family. Acetyl-CoA carboxylase is a heterohexamer composed of biotin carboxyl carrier protein (AccB), biotin carboxylase (AccC) and two subunits each of ACCase subunit alpha (AccA) and ACCase subunit beta (AccD). The cofactor is Zn(2+).

The protein resides in the cytoplasm. It catalyses the reaction N(6)-carboxybiotinyl-L-lysyl-[protein] + acetyl-CoA = N(6)-biotinyl-L-lysyl-[protein] + malonyl-CoA. The protein operates within lipid metabolism; malonyl-CoA biosynthesis; malonyl-CoA from acetyl-CoA: step 1/1. In terms of biological role, component of the acetyl coenzyme A carboxylase (ACC) complex. Biotin carboxylase (BC) catalyzes the carboxylation of biotin on its carrier protein (BCCP) and then the CO(2) group is transferred by the transcarboxylase to acetyl-CoA to form malonyl-CoA. This chain is Acetyl-coenzyme A carboxylase carboxyl transferase subunit beta, found in Streptococcus equi subsp. zooepidemicus (strain H70).